A 482-amino-acid polypeptide reads, in one-letter code: Protein farnesyltransferase subunit beta (482 aa).

PFTB repeat units follow at residues 131-172, 182-223, 230-271, and 278-319; these read ESNA…VTLG, REKM…SILN, TQGL…ILIN, and LDSL…VLLQ. Residues 256–259 and 298–301 each bind (2E,6E)-farnesyl diphosphate; these read HGGY and RTNK. Residues aspartate 304 and cysteine 306 each contribute to the Zn(2+) site. 307 to 310 is a (2E,6E)-farnesyl diphosphate binding site; sequence YTFW. The disordered stretch occupies residues 329 to 372; the sequence is VHGSSHISEGTNEEHHAHDEDDLEDSDDDDDSDEDNDEDSVNGH. Residues 348 to 368 are compositionally biased toward acidic residues; sequence EDDLEDSDDDDDSDEDNDEDS. Residues 391 to 433 form a PFTB 5 repeat; that stretch reads SLGLQRYVLLCSKIPDGGFRDKPRKPRDFYHTCYCLSGLSVAQ. Histidine 421 contacts Zn(2+).

The protein belongs to the protein prenyltransferase subunit beta family. Heterodimer of FTA and FTB (farnesyltransferase). Heterodimer of an alpha and a beta subunit. The cofactor is Zn(2+).

The enzyme catalyses L-cysteinyl-[protein] + (2E,6E)-farnesyl diphosphate = S-(2E,6E)-farnesyl-L-cysteinyl-[protein] + diphosphate. Catalyzes the transfer of a farnesyl moiety from farnesyl diphosphate to a cysteine at the fourth position from the C-terminus of several proteins having the C-terminal sequence Cys-aliphatic-aliphatic-X (CaaX). The beta subunit is responsible for peptide-binding. Acts as an abscisic acid (ABA) negative regulator by mediating ASG2 farnesylation and consequently monitoring its subcellular localization. Involved in responses to salt (NaCl) and osmotic (e.g. in response to mannitol and PEG) stresses. The sequence is that of Protein farnesyltransferase subunit beta (FTB) from Arabidopsis thaliana (Mouse-ear cress).